The primary structure comprises 224 residues: Transcription factor MYB1 (224 aa).

HTH myb-type domains lie at 10-66 (LGRV…KPSI) and 67-117 (KRGH…YKKH). 2 DNA-binding regions (H-T-H motif) span residues 38–62 (WKRV…LNYL) and 90–113 (WSLI…NTHL).

The protein localises to the nucleus. Its function is as follows. Activates DODA1 and CYP76AD1 in the betalain red pigment pathway. In Beta vulgaris (Sugar beet), this protein is Transcription factor MYB1.